A 207-amino-acid polypeptide reads, in one-letter code: dTTP/UTP pyrophosphatase (207 aa).

D79 serves as the catalytic Proton acceptor.

This sequence belongs to the Maf family. YhdE subfamily. A divalent metal cation serves as cofactor.

The protein resides in the cytoplasm. It catalyses the reaction dTTP + H2O = dTMP + diphosphate + H(+). It carries out the reaction UTP + H2O = UMP + diphosphate + H(+). Nucleoside triphosphate pyrophosphatase that hydrolyzes dTTP and UTP. May have a dual role in cell division arrest and in preventing the incorporation of modified nucleotides into cellular nucleic acids. In Rhodopseudomonas palustris (strain ATCC BAA-98 / CGA009), this protein is dTTP/UTP pyrophosphatase.